A 498-amino-acid chain; its full sequence is Thiamine transporter 1 (498 aa).

M1 bears the N-acetylmethionine mark. The Cytoplasmic segment spans residues 1 to 28; it reads MDVPARVSRRAAAAAARMLLRTARVPRE. The helical transmembrane segment at 29-46 threads the bilayer; that stretch reads CWFLPTALLCAYGFFANL. Residues 47 to 71 are Extracellular-facing; that stretch reads RPSEPFLTPYLLGPDKNLTERQVYN. N63 is a glycosylation site (N-linked (GlcNAc...) asparagine). The chain crosses the membrane as a helical span at residues 72–92; that stretch reads EIYPVWTYSYLLLLFPVFLAT. Residues 93–105 lie on the Cytoplasmic side of the membrane; sequence DYLRYKPVILLQG. Residues 106–126 form a helical membrane-spanning segment; sequence LSLIVTWFMLLYAQGLLAIQF. Residues 127–128 are Extracellular-facing; it reads LE. The helical transmembrane segment at 129–149 threads the bilayer; it reads FFYGIATATEIAYYSYIYTVV. Topologically, residues 150-164 are cytoplasmic; that stretch reads DLGMYQKVTSYCRSA. Residues 165-185 traverse the membrane as a helical segment; that stretch reads TLVGFTVGSVLGQILVSVVGW. A topological domain (extracellular) is located at residue S186. A helical transmembrane segment spans residues 187–207; the sequence is LFSLNVISLTCVSVAFAVAWF. Residues 208 to 295 lie on the Cytoplasmic side of the membrane; sequence LPMPQKSLFF…DFLMCYSSRP (88 aa). S222 carries the post-translational modification Phosphoserine. Residues 296 to 316 form a helical membrane-spanning segment; it reads LLCWSVWWALSTCGYFQVVNY. Over 317–334 the chain is Extracellular; sequence AQGLWEKVMPSQNADIYN. Residues 335-355 traverse the membrane as a helical segment; the sequence is GGVEAVSTLLGASAVFAVGYI. Residues 356–360 lie on the Cytoplasmic side of the membrane; sequence KLSWS. A helical transmembrane segment spans residues 361-381; sequence TWGEMTLFLCSLLIAAAVYVM. Residues 382-386 lie on the Extracellular side of the membrane; it reads DTVQS. The helical transmembrane segment at 387–407 threads the bilayer; it reads IWVCYASYVVFRIIYMVLITI. The Cytoplasmic segment spans residues 408–423; the sequence is ATFQIAANLSMERYAL. A helical transmembrane segment spans residues 424-444; it reads VFGVNTFIALALQTLLTLIVV. The Extracellular portion of the chain corresponds to 445–456; that stretch reads DARGLGLCITTQ. The chain crosses the membrane as a helical span at residues 457 to 477; it reads FLIYASYFAAISVVFLANGIV. Residues 478-498 are Cytoplasmic-facing; sequence SIIKKCRKQEDPSSSPQASTS.

This sequence belongs to the reduced folate carrier (RFC) transporter (TC 2.A.48) family. In terms of assembly, interacts with TSPAN1; this interaction increases the stability of SLC19A2. Interacts with TMEM63B. As to expression, expressed in liver. Expressed in cochlear hair cells and duodenum (at protein level). Detected in pancreatic acinar cells (at protein level). Also expressed strongly in pancreatic islet cells. Expressed in the testis. Very highly expressed in liver, and also detected at lower levels in heart, testis, kidney, brain and spleen. In terms of tissue distribution, expressed at low levels in liver and spleen.

Its subcellular location is the cell membrane. The enzyme catalyses thiamine(out) + H(+)(in) = thiamine(in) + H(+)(out). It carries out the reaction pyridoxine(out) + n H(+)(out) = pyridoxine(in) + n H(+)(in). High-affinity transporter for the intake of thiamine. Essential for spermatogenesis. Mediates H(+)-dependent pyridoxine transport. In Mus musculus (Mouse), this protein is Thiamine transporter 1.